The sequence spans 605 residues: Probable potassium transport system protein Kup (605 aa).

The next 12 helical transmembrane spans lie at 17–37, 45–65, 96–116, 140–160, 165–185, 211–231, 246–266, 286–306, 338–358, 367–387, 394–414, and 417–437; these read GLVF…IFAL, VFGI…VEYA, IAFV…DGVI, LGTL…FQFK, VAAA…VSGL, GISA…GEAL, AWYF…AFAL, LYIP…QALI, IYIG…MLIF, AYGL…TIIF, WKVP…ISNL, and LPHG…TILI.

Belongs to the HAK/KUP transporter (TC 2.A.72) family.

Its subcellular location is the cell inner membrane. The enzyme catalyses K(+)(in) + H(+)(in) = K(+)(out) + H(+)(out). Its function is as follows. Transport of potassium into the cell. Likely operates as a K(+):H(+) symporter. This chain is Probable potassium transport system protein Kup, found in Geotalea uraniireducens (strain Rf4) (Geobacter uraniireducens).